Reading from the N-terminus, the 365-residue chain is Flagellar P-ring protein (365 aa).

The N-terminal stretch at 1–19 is a signal peptide; sequence MIKFLSALILLLVTTAAQA.

This sequence belongs to the FlgI family. In terms of assembly, the basal body constitutes a major portion of the flagellar organelle and consists of four rings (L,P,S, and M) mounted on a central rod.

The protein localises to the periplasm. It localises to the bacterial flagellum basal body. Its function is as follows. Assembles around the rod to form the L-ring and probably protects the motor/basal body from shearing forces during rotation. This chain is Flagellar P-ring protein, found in Escherichia coli O9:H4 (strain HS).